We begin with the raw amino-acid sequence, 341 residues long: Phenylalanine--tRNA ligase alpha subunit (341 aa).

Residue Glu-252 participates in Mg(2+) binding.

Belongs to the class-II aminoacyl-tRNA synthetase family. Phe-tRNA synthetase alpha subunit type 1 subfamily. In terms of assembly, tetramer of two alpha and two beta subunits. Mg(2+) serves as cofactor.

It localises to the cytoplasm. The enzyme catalyses tRNA(Phe) + L-phenylalanine + ATP = L-phenylalanyl-tRNA(Phe) + AMP + diphosphate + H(+). The polypeptide is Phenylalanine--tRNA ligase alpha subunit (Malacoplasma penetrans (strain HF-2) (Mycoplasma penetrans)).